The chain runs to 254 residues: Segregation and condensation protein A (254 aa).

It belongs to the ScpA family. As to quaternary structure, component of a cohesin-like complex composed of ScpA, ScpB and the Smc homodimer, in which ScpA and ScpB bind to the head domain of Smc. The presence of the three proteins is required for the association of the complex with DNA.

It localises to the cytoplasm. Its function is as follows. Participates in chromosomal partition during cell division. May act via the formation of a condensin-like complex containing Smc and ScpB that pull DNA away from mid-cell into both cell halves. The chain is Segregation and condensation protein A from Clostridium tetani (strain Massachusetts / E88).